The sequence spans 61 residues: Large ribosomal subunit protein uL30 (61 aa).

The protein belongs to the universal ribosomal protein uL30 family. As to quaternary structure, part of the 50S ribosomal subunit.

This is Large ribosomal subunit protein uL30 from Corynebacterium aurimucosum (strain ATCC 700975 / DSM 44827 / CIP 107346 / CN-1) (Corynebacterium nigricans).